Consider the following 25-residue polypeptide: Ocellatin-1 (25 aa).

V25 carries the valine amide modification.

Expressed by the skin dorsal glands.

Its subcellular location is the secreted. Has hemolytic activity against human erythrocytes and antibacterial activity against the Gram-negative bacterium E.coli. This Leptodactylus ocellatus (Argus frog) protein is Ocellatin-1.